Reading from the N-terminus, the 101-residue chain is MIPGEILPADGDIELNAGRATLTLSVTNTGDRPIQVGSHYHFAETNAALAFDRAAARGFRLNIAAGTAVRFEPGQARTVELVALAGARKVYGFNGDVMGAL.

This sequence belongs to the urease beta subunit family. As to quaternary structure, heterotrimer of UreA (gamma), UreB (beta) and UreC (alpha) subunits. Three heterotrimers associate to form the active enzyme.

The protein localises to the cytoplasm. It catalyses the reaction urea + 2 H2O + H(+) = hydrogencarbonate + 2 NH4(+). It participates in nitrogen metabolism; urea degradation; CO(2) and NH(3) from urea (urease route): step 1/1. This chain is Urease subunit beta, found in Azoarcus sp. (strain BH72).